The following is a 278-amino-acid chain: 3-methyl-2-oxobutanoate hydroxymethyltransferase (278 aa).

Residues Asp43 and Asp82 each contribute to the Mg(2+) site. Residues 43-44 (DS), Asp82, and Lys112 each bind 3-methyl-2-oxobutanoate. Position 114 (Glu114) interacts with Mg(2+). Residue Glu181 is the Proton acceptor of the active site.

Belongs to the PanB family. Homodecamer; pentamer of dimers. The cofactor is Mg(2+).

It is found in the cytoplasm. The catalysed reaction is 3-methyl-2-oxobutanoate + (6R)-5,10-methylene-5,6,7,8-tetrahydrofolate + H2O = 2-dehydropantoate + (6S)-5,6,7,8-tetrahydrofolate. Its pathway is cofactor biosynthesis; (R)-pantothenate biosynthesis; (R)-pantoate from 3-methyl-2-oxobutanoate: step 1/2. Functionally, catalyzes the reversible reaction in which hydroxymethyl group from 5,10-methylenetetrahydrofolate is transferred onto alpha-ketoisovalerate to form ketopantoate. This Bacillus cereus (strain ATCC 10987 / NRS 248) protein is 3-methyl-2-oxobutanoate hydroxymethyltransferase.